Consider the following 146-residue polypeptide: Large ribosomal subunit protein uL15 (146 aa).

The segment at M1 to P56 is disordered. Composition is skewed to gly residues over residues R21–Q35 and S42–G52.

Belongs to the universal ribosomal protein uL15 family. In terms of assembly, part of the 50S ribosomal subunit.

Functionally, binds to the 23S rRNA. The protein is Large ribosomal subunit protein uL15 of Clostridium botulinum (strain Okra / Type B1).